A 171-amino-acid chain; its full sequence is Co-chaperone protein HscB (171 aa).

Positions 2 to 74 (DYFTLFGLPA…LMRAEYLLSL (73 aa)) constitute a J domain.

The protein belongs to the HscB family. As to quaternary structure, interacts with HscA and stimulates its ATPase activity. Interacts with IscU.

In terms of biological role, co-chaperone involved in the maturation of iron-sulfur cluster-containing proteins. Seems to help targeting proteins to be folded toward HscA. This is Co-chaperone protein HscB from Escherichia coli (strain SE11).